The chain runs to 184 residues: ATP synthase subunit b, chloroplastic (184 aa).

A helical membrane pass occupies residues leucine 27–leucine 49.

The protein belongs to the ATPase B chain family. F-type ATPases have 2 components, F(1) - the catalytic core - and F(0) - the membrane proton channel. F(1) has five subunits: alpha(3), beta(3), gamma(1), delta(1), epsilon(1). F(0) has four main subunits: a(1), b(1), b'(1) and c(10-14). The alpha and beta chains form an alternating ring which encloses part of the gamma chain. F(1) is attached to F(0) by a central stalk formed by the gamma and epsilon chains, while a peripheral stalk is formed by the delta, b and b' chains.

It localises to the plastid. The protein resides in the chloroplast thylakoid membrane. Its function is as follows. F(1)F(0) ATP synthase produces ATP from ADP in the presence of a proton or sodium gradient. F-type ATPases consist of two structural domains, F(1) containing the extramembraneous catalytic core and F(0) containing the membrane proton channel, linked together by a central stalk and a peripheral stalk. During catalysis, ATP synthesis in the catalytic domain of F(1) is coupled via a rotary mechanism of the central stalk subunits to proton translocation. In terms of biological role, component of the F(0) channel, it forms part of the peripheral stalk, linking F(1) to F(0). The chain is ATP synthase subunit b, chloroplastic from Spinacia oleracea (Spinach).